The following is a 352-amino-acid chain: C-C chemokine receptor type 5 (352 aa).

Residues 1–30 (MDYQVSSPIYDINYYTSEPCQKINVKQIAA) lie on the Extracellular side of the membrane. Residue Y3 is modified to Sulfotyrosine. Residues S6 and S7 are each glycosylated (O-linked (GalNAc...) serine). Residues Y10, Y14, and Y15 each carry the sulfotyrosine modification. Disulfide bonds link C20/C269 and C101/C178. The chain crosses the membrane as a helical span at residues 31 to 58 (RLLPPLYSLVFIFGFVGNMLVILILINC). Over 59–68 (KRLKSMTDIY) the chain is Cytoplasmic. Residues 69–89 (LLNLAISDLFFLLTVPFWAHY) form a helical membrane-spanning segment. Residues 90–102 (AAAQWDFGNTMCQ) lie on the Extracellular side of the membrane. The helical transmembrane segment at 103–124 (LLTGLYFIGFFSGIFFIILLTI) threads the bilayer. The Cytoplasmic segment spans residues 125-141 (DRYLAVVHAVFALKART). A helical transmembrane segment spans residues 142-166 (VTFGVVTSVITWVVAVFASLPGIIF). Topologically, residues 167-198 (TRSQKEGLHYTCSSHFPYSQYQFWKNFQTLKI) are extracellular. Residues 199 to 218 (VILGLVLPLLVMVICYSGIL) form a helical membrane-spanning segment. The Cytoplasmic portion of the chain corresponds to 219–235 (KTLLRCRNEKKRHRAVR). The chain crosses the membrane as a helical span at residues 236–260 (LIFTIMIVYFLFWAPYNIVLLLNTF). The Extracellular segment spans residues 261 to 277 (QEFFGLNNCSSSNRLDQ). The helical transmembrane segment at 278 to 301 (AMQVTETLGMTHCCINPIIYAFVG) threads the bilayer. The Cytoplasmic segment spans residues 302-352 (EKFRNYLLVFFQKHIAKRFCKCCSIFQQEAPERASSVYTRSTGEQEISVGL). 3 S-palmitoyl cysteine lipidation sites follow: C321, C323, and C324. S336, S337, S342, and S349 each carry phosphoserine; by BARK1.

This sequence belongs to the G-protein coupled receptor 1 family. In terms of assembly, interacts with PRAF2. Efficient ligand binding to CCL3/MIP-1alpha and CCL4/MIP-1beta requires sulfation, O-glycosylation and sialic acid modifications. Glycosylation on Ser-6 is required for efficient binding of CCL4. Interacts with GRK2. Interacts with ARRB1 and ARRB2. Interacts with CNIH4. Interacts with S100A4; this interaction stimulates T-lymphocyte chemotaxis. (Microbial infection) Interacts with HIV-1 surface protein gp120. As to quaternary structure, (Microbial infection) May interact with human cytomegalovirus/HHV-5 protein UL78. Sulfated on at least 2 of the N-terminal tyrosines. Sulfation contributes to the efficiency of HIV-1 entry and is required for efficient binding of the chemokines, CCL3 and CCL4. Post-translationally, O-glycosylated, but not N-glycosylated. Ser-6 appears to be the major site even if Ser-7 may be also O-glycosylated. Also sialylated glycans present which contribute to chemokine binding. Thr-16 and Ser-17 may also be glycosylated and, if so, with small moieties such as a T-antigen. In terms of processing, palmitoylation in the C-terminal is important for cell surface expression, and to a lesser extent, for HIV entry. Phosphorylation on serine residues in the C-terminal is stimulated by binding CC chemokines especially by APO-RANTES. In terms of tissue distribution, highly expressed in spleen, thymus, in the myeloid cell line THP-1, in the promyeloblastic cell line KG-1a and on CD4+ and CD8+ T-cells. Medium levels in peripheral blood leukocytes and in small intestine. Low levels in ovary and lung.

Its subcellular location is the cell membrane. Functionally, receptor for a number of inflammatory CC-chemokines including CCL3/MIP-1-alpha, CCL4/MIP-1-beta and RANTES and subsequently transduces a signal by increasing the intracellular calcium ion level. May play a role in the control of granulocytic lineage proliferation or differentiation. Participates in T-lymphocyte migration to the infection site by acting as a chemotactic receptor. Its function is as follows. (Microbial infection) Acts as a coreceptor (CD4 being the primary receptor) of human immunodeficiency virus-1/HIV-1. The chain is C-C chemokine receptor type 5 from Homo sapiens (Human).